A 60-amino-acid polypeptide reads, in one-letter code: Large ribosomal subunit protein uL30 (60 aa).

This sequence belongs to the universal ribosomal protein uL30 family. Part of the 50S ribosomal subunit.

In Flavobacterium psychrophilum (strain ATCC 49511 / DSM 21280 / CIP 103535 / JIP02/86), this protein is Large ribosomal subunit protein uL30.